Here is a 611-residue protein sequence, read N- to C-terminus: Dihydroxy-acid dehydratase (611 aa).

Asp82 lines the Mg(2+) pocket. A [2Fe-2S] cluster-binding site is contributed by Cys123. Mg(2+) contacts are provided by Asp124 and Lys125. The residue at position 125 (Lys125) is an N6-carboxylysine. Cys192 contributes to the [2Fe-2S] cluster binding site. A Mg(2+)-binding site is contributed by Glu489. Ser515 (proton acceptor) is an active-site residue. A compositionally biased stretch (basic and acidic residues) spans 565 to 574 (ERRKAEEARG). Residues 565–586 (ERRKAEEARGKKAFTPPTRQRE) are disordered.

Belongs to the IlvD/Edd family. As to quaternary structure, homodimer. It depends on [2Fe-2S] cluster as a cofactor. Mg(2+) serves as cofactor.

The catalysed reaction is (2R)-2,3-dihydroxy-3-methylbutanoate = 3-methyl-2-oxobutanoate + H2O. It carries out the reaction (2R,3R)-2,3-dihydroxy-3-methylpentanoate = (S)-3-methyl-2-oxopentanoate + H2O. The protein operates within amino-acid biosynthesis; L-isoleucine biosynthesis; L-isoleucine from 2-oxobutanoate: step 3/4. Its pathway is amino-acid biosynthesis; L-valine biosynthesis; L-valine from pyruvate: step 3/4. Functions in the biosynthesis of branched-chain amino acids. Catalyzes the dehydration of (2R,3R)-2,3-dihydroxy-3-methylpentanoate (2,3-dihydroxy-3-methylvalerate) into 2-oxo-3-methylpentanoate (2-oxo-3-methylvalerate) and of (2R)-2,3-dihydroxy-3-methylbutanoate (2,3-dihydroxyisovalerate) into 2-oxo-3-methylbutanoate (2-oxoisovalerate), the penultimate precursor to L-isoleucine and L-valine, respectively. This Parabacteroides distasonis (strain ATCC 8503 / DSM 20701 / CIP 104284 / JCM 5825 / NCTC 11152) protein is Dihydroxy-acid dehydratase.